Reading from the N-terminus, the 558-residue chain is Ankyrin repeat protein OPG189 (558 aa).

ANK repeat units follow at residues 65–95, 169–205, 209–239, 243–272, 276–304, 339–368, and 372–401; these read YGEN…NINK, YGCT…DVDK, YGNT…NIDS, NRYT…NVNA, FGTT…ELEI, YNET…DFET, and SGCT…SLKI.

Belongs to the orthopoxvirus OPG189 protein family.

Its function is as follows. Contributes to viral release without involving rearrangement of host actin. This chain is Ankyrin repeat protein OPG189 (OPG189), found in Vaccinia virus (strain Western Reserve) (VACV).